A 275-amino-acid polypeptide reads, in one-letter code: 4-diphosphocytidyl-2-C-methyl-D-erythritol kinase (275 aa).

K14 is an active-site residue. P98–S108 is a binding site for ATP. The active site involves D140.

The protein belongs to the GHMP kinase family. IspE subfamily.

The catalysed reaction is 4-CDP-2-C-methyl-D-erythritol + ATP = 4-CDP-2-C-methyl-D-erythritol 2-phosphate + ADP + H(+). It functions in the pathway isoprenoid biosynthesis; isopentenyl diphosphate biosynthesis via DXP pathway; isopentenyl diphosphate from 1-deoxy-D-xylulose 5-phosphate: step 3/6. Its function is as follows. Catalyzes the phosphorylation of the position 2 hydroxy group of 4-diphosphocytidyl-2C-methyl-D-erythritol. This Francisella tularensis subsp. tularensis (strain WY96-3418) protein is 4-diphosphocytidyl-2-C-methyl-D-erythritol kinase.